The following is a 335-amino-acid chain: Methionine import ATP-binding protein MetN (335 aa).

Residues 2–241 enclose the ABC transporter domain; it reads IEFQRLHKSY…PKHVTTRRFV (240 aa). Residue 38–45 participates in ATP binding; sequence GHSGAGKS.

The protein belongs to the ABC transporter superfamily. Methionine importer (TC 3.A.1.24) family. The complex is composed of two ATP-binding proteins (MetN), two transmembrane proteins (MetI) and a solute-binding protein (MetQ).

Its subcellular location is the cell inner membrane. It catalyses the reaction L-methionine(out) + ATP + H2O = L-methionine(in) + ADP + phosphate + H(+). The catalysed reaction is D-methionine(out) + ATP + H2O = D-methionine(in) + ADP + phosphate + H(+). Part of the ABC transporter complex MetNIQ involved in methionine import. Responsible for energy coupling to the transport system. The sequence is that of Methionine import ATP-binding protein MetN from Xanthomonas oryzae pv. oryzae (strain MAFF 311018).